A 683-amino-acid polypeptide reads, in one-letter code: Translation initiation factor IF-2 (683 aa).

The tr-type G domain occupies 182–351 (KRPPVVTVMG…ILTAEMEELK (170 aa)). The segment at 191 to 198 (GHVDHGKT) is G1. 191-198 (GHVDHGKT) contacts GTP. The interval 216-220 (GITQH) is G2. The segment at 237-240 (DTPG) is G3. GTP contacts are provided by residues 237–241 (DTPGH) and 291–294 (NKID). Residues 291-294 (NKID) form a G4 region. A G5 region spans residues 327-329 (SAH).

It belongs to the TRAFAC class translation factor GTPase superfamily. Classic translation factor GTPase family. IF-2 subfamily.

Its subcellular location is the cytoplasm. Its function is as follows. One of the essential components for the initiation of protein synthesis. Protects formylmethionyl-tRNA from spontaneous hydrolysis and promotes its binding to the 30S ribosomal subunits. Also involved in the hydrolysis of GTP during the formation of the 70S ribosomal complex. The chain is Translation initiation factor IF-2 from Clostridium novyi (strain NT).